A 264-amino-acid chain; its full sequence is Thymidylate synthase (264 aa).

Arg-21 serves as a coordination point for dUMP. His-51 is a binding site for (6R)-5,10-methylene-5,6,7,8-tetrahydrofolate. Arg-126–Arg-127 lines the dUMP pocket. The Nucleophile role is filled by Cys-146. DUMP is bound by residues Arg-166 to Asp-169, Asn-177, and His-207 to Tyr-209. Asp-169 provides a ligand contact to (6R)-5,10-methylene-5,6,7,8-tetrahydrofolate. Ala-263 is a (6R)-5,10-methylene-5,6,7,8-tetrahydrofolate binding site.

The protein belongs to the thymidylate synthase family. Bacterial-type ThyA subfamily. As to quaternary structure, homodimer.

It is found in the cytoplasm. It carries out the reaction dUMP + (6R)-5,10-methylene-5,6,7,8-tetrahydrofolate = 7,8-dihydrofolate + dTMP. It functions in the pathway pyrimidine metabolism; dTTP biosynthesis. Catalyzes the reductive methylation of 2'-deoxyuridine-5'-monophosphate (dUMP) to 2'-deoxythymidine-5'-monophosphate (dTMP) while utilizing 5,10-methylenetetrahydrofolate (mTHF) as the methyl donor and reductant in the reaction, yielding dihydrofolate (DHF) as a by-product. This enzymatic reaction provides an intracellular de novo source of dTMP, an essential precursor for DNA biosynthesis. This chain is Thymidylate synthase, found in Brevibacillus brevis (strain 47 / JCM 6285 / NBRC 100599).